A 295-amino-acid polypeptide reads, in one-letter code: Methionine aminopeptidase (295 aa).

Residue His62 coordinates substrate. A divalent metal cation contacts are provided by Asp82, Asp93, and His153. His161 is a substrate binding site. A divalent metal cation contacts are provided by Glu187 and Glu280.

This sequence belongs to the peptidase M24A family. Methionine aminopeptidase archaeal type 2 subfamily. In terms of assembly, monomer. Requires Co(2+) as cofactor. Zn(2+) is required as a cofactor. Mn(2+) serves as cofactor. The cofactor is Fe(2+).

It catalyses the reaction Release of N-terminal amino acids, preferentially methionine, from peptides and arylamides.. Removes the N-terminal methionine from nascent proteins. The N-terminal methionine is often cleaved when the second residue in the primary sequence is small and uncharged (Met-Ala-, Cys, Gly, Pro, Ser, Thr, or Val). This is Methionine aminopeptidase from Pyrococcus horikoshii (strain ATCC 700860 / DSM 12428 / JCM 9974 / NBRC 100139 / OT-3).